The following is a 277-amino-acid chain: Diaminopimelate epimerase (277 aa).

Substrate-binding residues include Asn-13, Gln-46, and Asn-65. Catalysis depends on Cys-74, which acts as the Proton donor. Residues 75–76 (GN), Asn-158, Asn-191, and 209–210 (ER) contribute to the substrate site. The active-site Proton acceptor is the Cys-218. 219–220 (GT) serves as a coordination point for substrate.

It belongs to the diaminopimelate epimerase family. In terms of assembly, homodimer.

The protein resides in the cytoplasm. The enzyme catalyses (2S,6S)-2,6-diaminopimelate = meso-2,6-diaminopimelate. It functions in the pathway amino-acid biosynthesis; L-lysine biosynthesis via DAP pathway; DL-2,6-diaminopimelate from LL-2,6-diaminopimelate: step 1/1. Functionally, catalyzes the stereoinversion of LL-2,6-diaminopimelate (L,L-DAP) to meso-diaminopimelate (meso-DAP), a precursor of L-lysine and an essential component of the bacterial peptidoglycan. In Nitrosospira multiformis (strain ATCC 25196 / NCIMB 11849 / C 71), this protein is Diaminopimelate epimerase.